Here is a 173-residue protein sequence, read N- to C-terminus: Soluble secreted antigen MPT53 (173 aa).

A signal peptide spans 1–38 (MSLRLVSPIKAFADGIVAVAIAVVLMFGLANTPRAVAA). Cys-73 and Cys-76 are disulfide-bonded.

It belongs to the thioredoxin family.

Its subcellular location is the secreted. Disulfide oxidoreductase that catalyzes the oxidation of reduced, unfolded secreted proteins to form disulfide bonds. Despite a weak homology to thioredoxin this cannot serve as a substrate for thioredoxin reductase. The sequence is that of Soluble secreted antigen MPT53 (mpt53) from Mycobacterium bovis (strain ATCC BAA-935 / AF2122/97).